The sequence spans 222 residues: Phosphoglycolate phosphatase (222 aa).

The active-site Nucleophile is D8. Mg(2+) is bound by residues D8 and D10. Residue K150 coordinates substrate. Residues D173 and D177 each coordinate Mg(2+).

The protein belongs to the archaeal SPP-like hydrolase family. Requires Mg(2+) as cofactor.

It carries out the reaction 2-phosphoglycolate + H2O = glycolate + phosphate. In terms of biological role, catalyzes the dephosphorylation of 2-phosphoglycolate. The polypeptide is Phosphoglycolate phosphatase (Metallosphaera sedula (strain ATCC 51363 / DSM 5348 / JCM 9185 / NBRC 15509 / TH2)).